The following is a 207-amino-acid chain: Guanylate kinase (207 aa).

Residues 6 to 185 (GLLIVLSGPS…AKNRIQCIVE (180 aa)) form the Guanylate kinase-like domain. 13–20 (GPSGVGKG) contributes to the ATP binding site.

Belongs to the guanylate kinase family.

It localises to the cytoplasm. The enzyme catalyses GMP + ATP = GDP + ADP. In terms of biological role, essential for recycling GMP and indirectly, cGMP. In Staphylococcus aureus (strain bovine RF122 / ET3-1), this protein is Guanylate kinase.